Reading from the N-terminus, the 49-residue chain is Disintegrin ocellatin (49 aa).

Residues 1–47 form the Disintegrin domain; sequence DCESGPCCDNCKFLKEGTICKMARGDNMHHYCNGKTCDCPRNPYKGE. 4 disulfides stabilise this stretch: C2-C11, C7-C32, C8-C37, and C20-C39. The Cell attachment site signature appears at 24–26; it reads RGD.

It belongs to the venom metalloproteinase (M12B) family. P-II subfamily. P-IIa sub-subfamily. In terms of assembly, monomer. In terms of tissue distribution, expressed by the venom gland.

It localises to the secreted. Inhibits ADP-induced human platelet aggregation. The polypeptide is Disintegrin ocellatin (Echis ocellatus (Ocellated saw-scaled viper)).